The following is a 274-amino-acid chain: Formamidopyrimidine-DNA glycosylase (274 aa).

Residue Pro-2 is the Schiff-base intermediate with DNA of the active site. Glu-3 acts as the Proton donor in catalysis. Lys-57 functions as the Proton donor; for beta-elimination activity in the catalytic mechanism. Residues His-92, Arg-111, and Lys-152 each contribute to the DNA site. The segment at 237 to 271 adopts an FPG-type zinc-finger fold; sequence QVYGRKGEECRECGTLIQAKVIGQRNSYFCPDCQP. Arg-261 acts as the Proton donor; for delta-elimination activity in catalysis.

Belongs to the FPG family. Monomer. The cofactor is Zn(2+).

The enzyme catalyses Hydrolysis of DNA containing ring-opened 7-methylguanine residues, releasing 2,6-diamino-4-hydroxy-5-(N-methyl)formamidopyrimidine.. The catalysed reaction is 2'-deoxyribonucleotide-(2'-deoxyribose 5'-phosphate)-2'-deoxyribonucleotide-DNA = a 3'-end 2'-deoxyribonucleotide-(2,3-dehydro-2,3-deoxyribose 5'-phosphate)-DNA + a 5'-end 5'-phospho-2'-deoxyribonucleoside-DNA + H(+). Involved in base excision repair of DNA damaged by oxidation or by mutagenic agents. Acts as a DNA glycosylase that recognizes and removes damaged bases. Has a preference for oxidized purines, such as 7,8-dihydro-8-oxoguanine (8-oxoG). Has AP (apurinic/apyrimidinic) lyase activity and introduces nicks in the DNA strand. Cleaves the DNA backbone by beta-delta elimination to generate a single-strand break at the site of the removed base with both 3'- and 5'-phosphates. The protein is Formamidopyrimidine-DNA glycosylase of Haemophilus ducreyi (strain 35000HP / ATCC 700724).